We begin with the raw amino-acid sequence, 354 residues long: Phenylalanine 4-monooxygenase, chloroplastic (354 aa).

Residues 1–60 (MAFPLQKTFLCSNGQSFPCSNGRSTSTLLASDLKFQRLNKPFILRVGSMQIRNSPKEHPR) constitute a chloroplast transit peptide. H229, H234, and E274 together coordinate Fe cation.

Belongs to the biopterin-dependent aromatic amino acid hydroxylase family. In terms of assembly, forms monomers. Fe(2+) is required as a cofactor.

The protein localises to the plastid. It localises to the chloroplast. It carries out the reaction (6R)-L-erythro-5,6,7,8-tetrahydrobiopterin + L-phenylalanine + O2 = (4aS,6R)-4a-hydroxy-L-erythro-5,6,7,8-tetrahydrobiopterin + L-tyrosine. Functionally, catalyzes the hydroxylation of L-phenylalanine to L-tyrosine. Does not seem to be tetrahydropterin-dependent and shows preference for 10-formyltetrahydrofolate as cosubstrate and electron donor. In Pinus taeda (Loblolly pine), this protein is Phenylalanine 4-monooxygenase, chloroplastic.